The primary structure comprises 143 residues: Transcriptional regulator MraZ (143 aa).

SpoVT-AbrB domains are found at residues S5–E47 and A76–R119.

Belongs to the MraZ family. Forms oligomers.

Its subcellular location is the cytoplasm. It is found in the nucleoid. This Parafrankia sp. (strain EAN1pec) protein is Transcriptional regulator MraZ.